The sequence spans 227 residues: Urease accessory protein UreF (227 aa).

The protein belongs to the UreF family. In terms of assembly, ureD, UreF and UreG form a complex that acts as a GTP-hydrolysis-dependent molecular chaperone, activating the urease apoprotein by helping to assemble the nickel containing metallocenter of UreC. The UreE protein probably delivers the nickel.

Its subcellular location is the cytoplasm. Required for maturation of urease via the functional incorporation of the urease nickel metallocenter. This chain is Urease accessory protein UreF, found in Methylobacillus flagellatus (strain ATCC 51484 / DSM 6875 / VKM B-1610 / KT).